Consider the following 62-residue polypeptide: UPF0434 protein Avi_4243 (62 aa).

It belongs to the UPF0434 family.

This Allorhizobium ampelinum (strain ATCC BAA-846 / DSM 112012 / S4) (Agrobacterium vitis (strain S4)) protein is UPF0434 protein Avi_4243.